The primary structure comprises 484 residues: Glutamyl-tRNA(Gln) amidotransferase subunit A (484 aa).

Residues Lys77 and Ser152 each act as charge relay system in the active site. Ser176 functions as the Acyl-ester intermediate in the catalytic mechanism.

Belongs to the amidase family. GatA subfamily. As to quaternary structure, heterotrimer of A, B and C subunits.

It catalyses the reaction L-glutamyl-tRNA(Gln) + L-glutamine + ATP + H2O = L-glutaminyl-tRNA(Gln) + L-glutamate + ADP + phosphate + H(+). Allows the formation of correctly charged Gln-tRNA(Gln) through the transamidation of misacylated Glu-tRNA(Gln) in organisms which lack glutaminyl-tRNA synthetase. The reaction takes place in the presence of glutamine and ATP through an activated gamma-phospho-Glu-tRNA(Gln). The polypeptide is Glutamyl-tRNA(Gln) amidotransferase subunit A (Lacticaseibacillus paracasei (strain ATCC 334 / BCRC 17002 / CCUG 31169 / CIP 107868 / KCTC 3260 / NRRL B-441) (Lactobacillus paracasei)).